The chain runs to 468 residues: Mitochondrial adenyl nucleotide antiporter SLC25A23 (468 aa).

The interval 1-149 is regulatory N-terminal domain; it reads MRGSPGDAER…DHFLLHSLEN (149 aa). The Mitochondrial intermembrane portion of the chain corresponds to 1-188; that stretch reads MRGSPGDAER…EKLTGMWWKQ (188 aa). In terms of domain architecture, EF-hand 1 spans 9 to 44; that stretch reads ERRQRWGRLFEELDSNKDGRVDVHELRQGLARLGGG. 5 residues coordinate Ca(2+): D22, N24, D26, R28, and E33. Residues 34-67 are disordered; sequence LRQGLARLGGGNPDPGAQQGISSEGDADPDGGLD. A compositionally biased stretch (acidic residues) spans 58–67; that stretch reads GDADPDGGLD. EF-hand domains lie at 77 to 112 and 113 to 148; these read EREQRLLLMFHSLDRNQDGHIDVSEIQQSFRALGIS and ISLEQAEKILHSMDRDGTMTIDWQEWRDHFLLHSLE. Ca(2+) contacts are provided by D90, N92, D94, H96, and E101. Residues 150-159 are linker region; that stretch reads VEDVLYFWKH. The segment at 165 to 468 is C-terminal transmembrane transporter domain; the sequence is IGECLTVPDE…MKQALGVTSR (304 aa). Solcar repeat units follow at residues 183 to 269, 277 to 362, and 374 to 462; these read GMWW…IKRA, LHVQ…LKNW, and PGIL…MKQA. Residues 189-206 form a helical membrane-spanning segment; the sequence is LVAGAVAGAVSRTGTAPL. Residues 207–243 are Mitochondrial matrix-facing; that stretch reads DRLKVFMQVHASKTNRLNILGGLRSMVLEGGIRSLWR. The helical transmembrane segment at 244-263 threads the bilayer; sequence GNGINVLKIAPESAIKFMAY. The Mitochondrial intermembrane portion of the chain corresponds to 264-286; the sequence is EQIKRAILGQQETLHVQERFVAG. The helical transmembrane segment at 287 to 300 threads the bilayer; sequence SLAGATAQTIIYPM. Residues 301–336 are Mitochondrial matrix-facing; that stretch reads EVLKTRLTLRRTGQYKGLLDCARRILEREGPRAFYR. A helical transmembrane segment spans residues 337–356; the sequence is GYLPNVLGIIPYAGIDLAVY. Residues 357–379 lie on the Mitochondrial intermembrane side of the membrane; sequence ETLKNWWLQQYSHDSADPGILVL. The chain crosses the membrane as a helical span at residues 380–397; the sequence is LACGTISSTCGQIASYPL. The Mitochondrial matrix portion of the chain corresponds to 398–436; that stretch reads ALVRTRMQAQASIEGGPQLSMLGLLRHILSQEGMRGLYR. The chain crosses the membrane as a helical span at residues 437-456; it reads GIAPNFMKVIPAVSISYVVY. Residues 457–468 lie on the Mitochondrial intermembrane side of the membrane; the sequence is ENMKQALGVTSR.

It belongs to the mitochondrial carrier (TC 2.A.29) family. In terms of assembly, interacts with MCU. Interacts with MICU1. In terms of tissue distribution, expressed at low levels in most tissues examined, with highest expression in brain, skeletal muscle and pancreas.

Its subcellular location is the mitochondrion inner membrane. It carries out the reaction Mg(2+)(out) + phosphate(in) + ATP(out) = Mg(2+)(in) + phosphate(out) + ATP(in). The enzyme catalyses ADP(out) + phosphate(in) + H(+)(out) = ADP(in) + phosphate(out) + H(+)(in). The catalysed reaction is AMP(out) + phosphate(in) = AMP(in) + phosphate(out). It catalyses the reaction phosphate(in) + ATP(out) + 2 H(+)(out) = phosphate(out) + ATP(in) + 2 H(+)(in). It carries out the reaction dADP(in) + ADP(out) = dADP(out) + ADP(in). The enzyme catalyses Mg(2+)(in) + ADP(out) + ATP(in) + H(+)(out) = Mg(2+)(out) + ADP(in) + ATP(out) + H(+)(in). The catalysed reaction is ADP(out) + diphosphate(in) = ADP(in) + diphosphate(out). It catalyses the reaction dAMP(in) + ADP(out) + H(+)(out) = dAMP(out) + ADP(in) + H(+)(in). It carries out the reaction 3'-AMP(in) + ADP(out) + H(+)(out) = 3'-AMP(out) + ADP(in) + H(+)(in). The enzyme catalyses dAMP(out) + phosphate(in) = dAMP(in) + phosphate(out). The catalysed reaction is 3'-AMP(out) + phosphate(in) = 3'-AMP(in) + phosphate(out). It catalyses the reaction dADP(out) + phosphate(in) + H(+)(out) = dADP(in) + phosphate(out) + H(+)(in). Activated by an increase in cytosolic calcium levels that induce a conformational change of the N-terminal regulatory domain, uncapping the channel and allowing transport. Inhibited by bathophenanthroline, mersalyl, p-hydroxymercuribenzoate, bromcresol purple, tannic acid, pyridoxal 5'-phosphate and p-hydroxymercuribenzoate. In terms of biological role, electroneutral antiporter that mediates the transport of adenine nucleotides through the inner mitochondrial membrane. Originally identified as an ATP-magnesium/inorganic phosphate antiporter, it also acts as a broad specificity adenyl nucleotide antiporter. By regulating the mitochondrial matrix adenine nucleotide pool could adapt to changing cellular energetic demands and indirectly regulate adenine nucleotide-dependent metabolic pathways. Also acts as a regulator of mitochondrial calcium uptake and can probably transport trace amounts of other divalent metal cations in complex with ATP. In vitro, a low activity is also observed with guanyl and pyrimidine nucleotides. In Homo sapiens (Human), this protein is Mitochondrial adenyl nucleotide antiporter SLC25A23.